Here is a 266-residue protein sequence, read N- to C-terminus: MMQRCVWRLQMPLALRRGLASGEAKNQGVSPEAEPLDSFERQYLKDRIEISPFQRVILGAGSSIAALLDPRRHDMIACLGETTGEGALENILDTMQASEEGQRIMAEKPRIHTSTIDFKLLESLPADSFGAAYVKFLKDNQVTPDSRMAVRFLEDPKLAYLMTRYRECHDLIHTVLGMPTNMLGEVAVKWVEALNTGLPMCYGGAVFGAVRLRPKQRRAYLKHYLPWALENGKRSKPLMPVYWEKRWEQKLQDLRAELGITVLNKV.

Residues His-169, Asp-170, His-173, and Glu-185 each contribute to the Zn(2+) site.

This sequence belongs to the COQ4 family. Component of a multi-subunit COQ enzyme complex. Zn(2+) is required as a cofactor.

It is found in the mitochondrion inner membrane. The enzyme catalyses a 4-hydroxy-3-methoxy-5-(all-trans-polyprenyl)benzoate + H(+) = a 2-methoxy-6-(all-trans-polyprenyl)phenol + CO2. It participates in cofactor biosynthesis; ubiquinone biosynthesis. Its function is as follows. Lyase that catalyzes the C1-decarboxylation of 4-hydroxy-3-methoxy-5-(all-trans-polyprenyl)benzoic acid into 2-methoxy-6-(all-trans-polyprenyl)phenol during ubiquinone biosynthesis. In Drosophila ananassae (Fruit fly), this protein is Ubiquinone biosynthesis protein COQ4 homolog, mitochondrial.